Here is an 805-residue protein sequence, read N- to C-terminus: Phenylalanine--tRNA ligase beta subunit (805 aa).

The tRNA-binding domain occupies 39–154 (SEGLKKVVVG…DDATPGDPVF (116 aa)). The region spanning 410–485 (VQPTTVTIDL…RLYGYDNLPA (76 aa)) is the B5 domain. The Mg(2+) site is built by aspartate 463, aspartate 469, glutamate 472, and glutamate 473. The FDX-ACB domain maps to 712 to 805 (SKFPSITRDV…LTDELGAEIR (94 aa)).

Belongs to the phenylalanyl-tRNA synthetase beta subunit family. Type 1 subfamily. As to quaternary structure, tetramer of two alpha and two beta subunits. It depends on Mg(2+) as a cofactor.

It localises to the cytoplasm. The enzyme catalyses tRNA(Phe) + L-phenylalanine + ATP = L-phenylalanyl-tRNA(Phe) + AMP + diphosphate + H(+). The sequence is that of Phenylalanine--tRNA ligase beta subunit from Lactiplantibacillus plantarum (strain ATCC BAA-793 / NCIMB 8826 / WCFS1) (Lactobacillus plantarum).